The following is a 303-amino-acid chain: Proteasome subunit beta (303 aa).

The propeptide at 1 to 67 (MTWQFPDRLS…SGGTGQLPHG (67 aa)) is removed in mature form; by autocatalysis. The active-site Nucleophile is threonine 68.

It belongs to the peptidase T1B family. In terms of assembly, the 20S proteasome core is composed of 14 alpha and 14 beta subunits that assemble into four stacked heptameric rings, resulting in a barrel-shaped structure. The two inner rings, each composed of seven catalytic beta subunits, are sandwiched by two outer rings, each composed of seven alpha subunits. The catalytic chamber with the active sites is on the inside of the barrel. Has a gated structure, the ends of the cylinder being occluded by the N-termini of the alpha-subunits. Is capped by the proteasome-associated ATPase, ARC.

It localises to the cytoplasm. It carries out the reaction Cleavage of peptide bonds with very broad specificity.. It functions in the pathway protein degradation; proteasomal Pup-dependent pathway. Its activity is regulated as follows. The formation of the proteasomal ATPase ARC-20S proteasome complex, likely via the docking of the C-termini of ARC into the intersubunit pockets in the alpha-rings, may trigger opening of the gate for substrate entry. Interconversion between the open-gate and close-gate conformations leads to a dynamic regulation of the 20S proteasome proteolysis activity. Its function is as follows. Component of the proteasome core, a large protease complex with broad specificity involved in protein degradation. The sequence is that of Proteasome subunit beta from Mycolicibacterium paratuberculosis (strain ATCC BAA-968 / K-10) (Mycobacterium paratuberculosis).